The sequence spans 554 residues: Phosphomannomutase (554 aa).

Ser149 functions as the Phosphoserine intermediate in the catalytic mechanism. The Mg(2+) site is built by Ser149, Asp301, Asp303, and Asp305.

This sequence belongs to the phosphohexose mutase family. Mg(2+) is required as a cofactor.

It catalyses the reaction alpha-D-mannose 1-phosphate = D-mannose 6-phosphate. The sequence is that of Phosphomannomutase (manB) from Mycoplasma pneumoniae (strain ATCC 29342 / M129 / Subtype 1) (Mycoplasmoides pneumoniae).